Consider the following 85-residue polypeptide: Conotoxin Lv15a (85 aa).

The first 23 residues, 1–23, serve as a signal peptide directing secretion; sequence MEKLTVLILVATVLLMIQVLAQS. A propeptide spanning residues 24-49 is cleaved from the precursor; it reads GGDKHLKRRPKQYATKRLSALMRGHR. The residue at position 50 (Gln50) is a Pyrrolidone carboxylic acid.

This sequence belongs to the conotoxin O2 superfamily. Contains 4 disulfide bonds. As to expression, expressed by the venom duct.

The protein resides in the secreted. In Conus lividus (Livid cone), this protein is Conotoxin Lv15a.